The following is a 408-amino-acid chain: Centromere protein U (408 aa).

Residues 1–33 are compositionally biased toward basic residues; sequence DRPRPARLSHARFSKNHSGRTHSMKDKAGRKHR. The segment at 1–218 is disordered; it reads DRPRPARLSH…GKRKKPRSYT (218 aa). A Phosphothreonine; by PLK1 modification is found at threonine 72. Threonine 92 is modified (phosphothreonine). Positions 94–103 are enriched in basic and acidic residues; the sequence is QEKEAKRSSD. Position 102 is a phosphoserine (serine 102). Residue threonine 104 is modified to Phosphothreonine. Serine 105, serine 110, and serine 114 each carry phosphoserine. Residues 118 to 127 are compositionally biased toward basic residues; that stretch reads SAKKPRRKLK. 3 positions are modified to phosphoserine: serine 130, serine 133, and serine 135. Over residues 176–186 the composition is skewed to polar residues; sequence PQKTGPQSAES. A Glycyl lysine isopeptide (Lys-Gly) (interchain with G-Cter in SUMO2) cross-link involves residue lysine 178. Phosphoserine occurs at positions 183 and 187. Phosphothreonine is present on threonine 192. At serine 222 the chain carries Phosphoserine. The stretch at 273–350 forms a coiled coil; it reads SNLKEELIKM…LRKAAYFLSN (78 aa). Residues 293-310 carry the Nuclear localization signal motif; it reads KRKNAKIISNIEKKRQRL.

Belongs to the CENP-U/AME1 family. As to quaternary structure, component of the CENPA-NAC complex, at least composed of CENPA, CENPC, CENPH, CENPM, CENPN, CENPT and CENPU. The CENPA-NAC complex interacts with the CENPA-CAD complex, composed of CENPI, CENPK, CENPL, CENPO, CENPP, CENPQ, CENPR and CENPS. Interacts with MLF1. Phosphorylated by PLK1 at Thr-72, creating a self-tethering site that specifically interacts with the polo-box domain of PLK1.

The protein localises to the cytoplasm. It is found in the nucleus. It localises to the chromosome. Its subcellular location is the centromere. The protein resides in the kinetochore. Its function is as follows. Component of the CENPA-NAC (nucleosome-associated) complex, a complex that plays a central role in assembly of kinetochore proteins, mitotic progression and chromosome segregation. The CENPA-NAC complex recruits the CENPA-CAD (nucleosome distal) complex and may be involved in incorporation of newly synthesized CENPA into centromeres. Plays an important role in the correct PLK1 localization to the mitotic kinetochores. A scaffold protein responsible for the initial recruitment and maintenance of the kinetochore PLK1 population until its degradation. Involved in transcriptional repression. This is Centromere protein U (CENPU) from Bos taurus (Bovine).